A 664-amino-acid chain; its full sequence is PAN2-PAN3 deadenylation complex subunit PAN3 (664 aa).

2 disordered regions span residues 1–27 (MATT…GREN) and 54–134 (DPHK…PGTM). The segment at 27-56 (NAKDTLCRNVTIYGRCRYEDKGCAFNHDPH) adopts a C3H1-type zinc-finger fold. Residues 74 to 96 (DSPSFTPSILSSNGSSPTSQSAT) are compositionally biased toward polar residues. Low complexity predominate over residues 115–131 (PRSISSRSNSSTPTTRP). The pseudokinase domain stretch occupies residues 265 to 525 (QTLPNTQLPA…NIDIFITGIS (261 aa)). ATP-binding positions include arginine 317, 366-373 (DYHPLSKT), and 425-426 (SK). Residues 526–564 (STLMSTFDSALHLDDQLTSDLSRELENGRLVRLMTKLNF) adopt a coiled-coil conformation. The tract at residues 565-664 (VNERPEYEHD…LKPSASRRLH (100 aa)) is knob domain.

Belongs to the protein kinase superfamily. PAN3 family. As to quaternary structure, homodimer. Forms a heterotrimer with a catalytic subunit pan2 to form the poly(A)-nuclease (PAN) deadenylation complex. Interacts (via PAM-2 motif) with poly(A)-binding protein pab1 (via PABC domain), conferring substrate specificity of the enzyme complex.

It is found in the cytoplasm. Its function is as follows. Regulatory subunit of the poly(A)-nuclease (PAN) deadenylation complex, one of two cytoplasmic mRNA deadenylases involved in mRNA turnover. PAN specifically shortens poly(A) tails of RNA and the activity is stimulated by poly(A)-binding protein pab1. PAN deadenylation is followed by rapid degradation of the shortened mRNA tails by the CCR4-NOT complex. Deadenylated mRNAs are then degraded by two alternative mechanisms, namely exosome-mediated 3'-5' exonucleolytic degradation, or deadenylation-dependent mRNA decaping and subsequent 5'-3' exonucleolytic degradation by xrn1. May also be involved in post-transcriptional maturation of mRNA poly(A) tails. pan3 acts as a positive regulator for PAN activity, recruiting the catalytic subunit pan2 to mRNA via its interaction with RNA and with pab1. This chain is PAN2-PAN3 deadenylation complex subunit PAN3, found in Aspergillus niger (strain ATCC MYA-4892 / CBS 513.88 / FGSC A1513).